Here is a 499-residue protein sequence, read N- to C-terminus: MALLRCLFLLAVLLPHRNAAVVAAASPHHGPAPHDYRDALTKSILFFEGQRSGKLPPSQRVSWRGDSGLSDGSSIKVDLVGGYYDAGDNMKFGFPLAFSMTMLAWSVVEFGGLMKGELQHARDAVRWGSDYLLKATAHPDTVYVQVGDANRDHACWERPEDMDTPRTVYKVDPSTPGTDVAAETAAALAAASLVFRKSDPAYASRLVARAKRVFEFADKHRGTYSTRLSPYVCPYYCSYSGYQDELLWGAAWLHRATKNPTYLSYIQMNGQVLGADEQDNTFGWDNKHAGARILIAKAFLVQKVAALHEYKGHADSFICSMVPGTPTDQTQYTRGGLLFKLSDSNMQYVTSSSFLLLTYAKYLAFSKTTVSCGGAAVTPARLRAIARQQVDYLLGSNPMGMSYMVGYGAKYPRRIHHRASSLPSVAAHPARIGCSQGFTALYSGVANPNVLVGAVVGGPNLQDQFPDQRSDHEHSEPATYINAPLVGALAYLAHSYGQL.

A signal peptide spans 1–19; sequence MALLRCLFLLAVLLPHRNA. Aspartate 88 acts as the Nucleophile in catalysis. Active-site residues include histidine 416, aspartate 467, and glutamate 476.

The protein belongs to the glycosyl hydrolase 9 (cellulase E) family. Expressed in flowers.

It localises to the secreted. The enzyme catalyses Endohydrolysis of (1-&gt;4)-beta-D-glucosidic linkages in cellulose, lichenin and cereal beta-D-glucans.. The chain is Endoglucanase 3 (GLU8) from Oryza sativa subsp. japonica (Rice).